The following is a 310-amino-acid chain: HTH-type transcriptional regulator PunR (310 aa).

The HTH lysR-type domain occupies 2-59; the sequence is WSEYSLEVVDAVARNGSFSAAAQELHRVPSAVSYTVRQLEEWLAVPLFERRHRDVELT. The segment at residues 19-38 is a DNA-binding region (H-T-H motif); it reads FSAAAQELHRVPSAVSYTVR.

Belongs to the LysR transcriptional regulatory family.

The protein resides in the cytoplasm. Its function is as follows. Transcriptional regulator that activates the expression of punC, which encodes a purine nucleoside transporter. The sequence is that of HTH-type transcriptional regulator PunR from Escherichia coli O157:H7.